Consider the following 109-residue polypeptide: Phosphoribosyl-ATP pyrophosphatase (109 aa).

This sequence belongs to the PRA-PH family.

The protein resides in the cytoplasm. It catalyses the reaction 1-(5-phospho-beta-D-ribosyl)-ATP + H2O = 1-(5-phospho-beta-D-ribosyl)-5'-AMP + diphosphate + H(+). The protein operates within amino-acid biosynthesis; L-histidine biosynthesis; L-histidine from 5-phospho-alpha-D-ribose 1-diphosphate: step 2/9. The polypeptide is Phosphoribosyl-ATP pyrophosphatase (Geobacter metallireducens (strain ATCC 53774 / DSM 7210 / GS-15)).